A 42-amino-acid polypeptide reads, in one-letter code: Bacteriocin bavaricin-MN (42 aa).

A disulfide bond links cysteine 10 and cysteine 15.

Belongs to the bacteriocin class IIA/YGNGV family.

It is found in the secreted. Has antimicrobial activity. The chain is Bacteriocin bavaricin-MN from Latilactobacillus sakei (Lactobacillus sakei).